Here is a 304-residue protein sequence, read N- to C-terminus: Acetyl-coenzyme A carboxylase carboxyl transferase subunit beta (304 aa).

The CoA carboxyltransferase N-terminal domain occupies 23–292 (VWTKCDSCGQ…PNPEAPREGV (270 aa)). Zn(2+)-binding residues include cysteine 27, cysteine 30, cysteine 46, and cysteine 49. The C4-type zinc finger occupies 27–49 (CDSCGQVLYRAELERNLEVCPKC). Residues 284 to 304 (NPEAPREGVVVPPVPDQEPEA) are disordered. Residues 295–304 (PPVPDQEPEA) are compositionally biased toward pro residues.

This sequence belongs to the AccD/PCCB family. As to quaternary structure, acetyl-CoA carboxylase is a heterohexamer composed of biotin carboxyl carrier protein (AccB), biotin carboxylase (AccC) and two subunits each of ACCase subunit alpha (AccA) and ACCase subunit beta (AccD). It depends on Zn(2+) as a cofactor.

It localises to the cytoplasm. It carries out the reaction N(6)-carboxybiotinyl-L-lysyl-[protein] + acetyl-CoA = N(6)-biotinyl-L-lysyl-[protein] + malonyl-CoA. It functions in the pathway lipid metabolism; malonyl-CoA biosynthesis; malonyl-CoA from acetyl-CoA: step 1/1. Component of the acetyl coenzyme A carboxylase (ACC) complex. Biotin carboxylase (BC) catalyzes the carboxylation of biotin on its carrier protein (BCCP) and then the CO(2) group is transferred by the transcarboxylase to acetyl-CoA to form malonyl-CoA. This chain is Acetyl-coenzyme A carboxylase carboxyl transferase subunit beta, found in Shigella boydii serotype 18 (strain CDC 3083-94 / BS512).